The primary structure comprises 457 residues: Phenylalanine-4-hydroxylase (457 aa).

Residues 31 to 108 (TIVFTLREKA…EKKVLVQDWN (78 aa)) form the ACT domain. Fe cation is bound by residues His285, His290, and Glu330.

This sequence belongs to the biopterin-dependent aromatic amino acid hydroxylase family. As to quaternary structure, homotetramer. Fe(2+) serves as cofactor. As to expression, expressed in the seam cells of the lateral hypodermis, in the ventral hypodermis and in the hyp7 hypodermal syncytium, in hypodermal cells in the tail and in body wall muscle cells (at protein level).

It localises to the cytoplasm. The enzyme catalyses (6R)-L-erythro-5,6,7,8-tetrahydrobiopterin + L-phenylalanine + O2 = (4aS,6R)-4a-hydroxy-L-erythro-5,6,7,8-tetrahydrobiopterin + L-tyrosine. The catalysed reaction is (6R)-L-erythro-5,6,7,8-tetrahydrobiopterin + L-tryptophan + O2 = 5-hydroxy-L-tryptophan + (4aS,6R)-4a-hydroxy-L-erythro-5,6,7,8-tetrahydrobiopterin. Its pathway is amino-acid degradation; L-phenylalanine degradation; acetoacetate and fumarate from L-phenylalanine: step 1/6. Its activity is regulated as follows. Inhibited by tetrahydrobiopterin. Unlike its mammalian orthologs, pah-1 does not exhibit allosteric binding behavior for phenylalanine. Functionally, catalyzes the hydroxylation of L-phenylalanine to L-tyrosine. Catalyzes the hydroxylation of tryptophan to 5-hydroxy-L-tryptophan. Plays a role in the biosynthesis of a melanin-like cuticle pigment. The sequence is that of Phenylalanine-4-hydroxylase from Caenorhabditis elegans.